The sequence spans 481 residues: Phosphoglycerate kinase 1, chloroplastic (481 aa).

A chloroplast-targeting transit peptide spans 1 to 75 (MASAAASSAF…VRGKGSRGVV (75 aa)). S81 carries the phosphoserine modification. Positions 99, 100, 102, 116, 138, 139, 141, 142, 197, 229, and 230 each coordinate (2R)-3-phosphoglycerate. Position 275 (G275) interacts with ADP. Residue G275 coordinates CDP. 2 residues coordinate AMP: K277 and K281. K281 contacts ATP. An ADP-binding site is contributed by G299. G299 contacts CDP. AMP-binding residues include G300 and G372. 2 residues coordinate ATP: G300 and G372. G397 and F402 together coordinate CDP. An ADP-binding site is contributed by F402. Residue E403 coordinates AMP. ATP contacts are provided by E403, D434, and S435. D434 serves as a coordination point for Mg(2+).

The protein belongs to the phosphoglycerate kinase family. Monomer. Binds to FTSZ2-1 and FTSZ2-2. The cofactor is Mg(2+).

It localises to the plastid. The protein resides in the chloroplast. The enzyme catalyses (2R)-3-phosphoglycerate + ATP = (2R)-3-phospho-glyceroyl phosphate + ADP. The protein operates within carbohydrate biosynthesis; Calvin cycle. May trigger the phosphorylation of FTSZ2-1 and FTSZ2-2. This chain is Phosphoglycerate kinase 1, chloroplastic, found in Arabidopsis thaliana (Mouse-ear cress).